We begin with the raw amino-acid sequence, 445 residues long: Dolichyl-diphosphooligosaccharide--protein glycosyltransferase 48 kDa subunit (445 aa).

The N-terminal stretch at 1 to 20 (MRWLPGLLLIASIGFHQSLA) is a signal peptide. Residues 21-405 (DRVLVLGETA…YERFIRSAYP (385 aa)) are Lumenal-facing. A helical transmembrane segment spans residues 406–426 (YYASSFSMMAGLVLFSIVYLY). Topologically, residues 427–445 (HKDTPVKGAKVLDSEKKKN) are cytoplasmic.

This sequence belongs to the DDOST 48 kDa subunit family. In terms of assembly, component of the oligosaccharyltransferase (OST) complex.

Its subcellular location is the endoplasmic reticulum membrane. It participates in protein modification; protein glycosylation. In terms of biological role, subunit of the oligosaccharyl transferase (OST) complex that catalyzes the initial transfer of a defined glycan (Glc(3)Man(9)GlcNAc(2) in eukaryotes) from the lipid carrier dolichol-pyrophosphate to an asparagine residue within an Asn-X-Ser/Thr consensus motif in nascent polypeptide chains, the first step in protein N-glycosylation. N-glycosylation occurs cotranslationally and the complex associates with the Sec61 complex at the channel-forming translocon complex that mediates protein translocation across the endoplasmic reticulum (ER). All subunits are required for a maximal enzyme activity. Required for the assembly of both SST3A- and SS3B-containing OST complexes. Required for normal lifespan. The polypeptide is Dolichyl-diphosphooligosaccharide--protein glycosyltransferase 48 kDa subunit (Caenorhabditis elegans).